We begin with the raw amino-acid sequence, 54 residues long: Ovomucoid (54 aa).

The Kazal-like domain occupies 4-54 (VDCSEYPKPACTLEYRPLCGSDSKTYGNKCNFCNAVVESNGTLTLSHFGKC). 3 disulfides stabilise this stretch: cysteine 6–cysteine 36, cysteine 14–cysteine 33, and cysteine 22–cysteine 54. A glycan (N-linked (GlcNAc...) asparagine) is linked at asparagine 43.

It localises to the secreted. In Alectoris chukar (Chukar partridge), this protein is Ovomucoid.